A 207-amino-acid polypeptide reads, in one-letter code: Ras-related protein Rab-7a (207 aa).

An N-acetylthreonine modification is found at Thr-2. GTP contacts are provided by Ser-17, Gly-18, Val-19, Gly-20, Lys-21, Thr-22, Ser-23, Ser-34, Asn-35, Tyr-37, and Thr-40. Thr-22 contributes to the Mg(2+) binding site. Positions 28–41 match the Switch 1 motif; that stretch reads YVNKKFSNQYKATI. Mg(2+) contacts are provided by Thr-40 and Asp-63. Gly-66 is a GTP binding site. A Switch 2 motif is present at residues 67-82; that stretch reads QERFQSLSVAFYRGAD. At Ser-72 the chain carries Phosphoserine. Positions 125, 126, 128, 156, and 157 each coordinate GTP. Residues Lys-191 and Lys-194 each participate in a glycyl lysine isopeptide (Lys-Gly) (interchain with G-Cter in ubiquitin) cross-link. Residues Cys-205 and Cys-207 are each lipidated (S-geranylgeranyl cysteine). At Cys-207 the chain carries Cysteine methyl ester.

It belongs to the small GTPase superfamily. Rab family. Interacts with NTRK1/TRKA. Interacts with RILP. Interacts with PSMA7. Interacts with RNF115. Interacts with FYCO1. Interacts with the PIK3C3/VPS34-PIK3R4 complex. The GTP-bound form interacts with OSBPL1A. The GTP-bound form interacts with RAC1. Interacts with CLN3. Interacts with CHM, the substrate-binding subunit of the Rab geranylgeranyltransferase complex. Interacts with C9orf72. Does not interact with HPS4 and the BLOC-3 complex (heterodimer of HPS1 and HPS4). Interacts with CLN5. Interacts with PLEKHM1 (via N- and C-terminus). Interacts with PRPH; the interaction is direct. Interacts with VPS13A. The GDP-bound form interacts with RIMOC1. Interacts with the MON1A-CCZ1B complex and this interaction is enhanced in the presence of RIMOC1. Interacts with VPS39 and VPS41. Forms a ternary complex with LAMP2 and RUFY4; the interaction with LAMP2 is mediated by RUFY4 (via RUN and coiled coil domains). Requires Mg(2+) as cofactor. In terms of processing, deubiquitination at Lys-191 and Lys-194 by USP32. Post-translationally, phosphorylated at Ser-72 by LRRK1; phosphorylation is dependent on protein kinase C (PKC) activation of LRRK1. Prenylated. Prenylation is required for association with cellular membranes.

The protein localises to the cytoplasmic vesicle. It localises to the phagosome membrane. It is found in the late endosome membrane. The protein resides in the lysosome membrane. Its subcellular location is the melanosome membrane. The protein localises to the autophagosome membrane. It localises to the lipid droplet. It is found in the endosome membrane. The protein resides in the mitochondrion membrane. The catalysed reaction is GTP + H2O = GDP + phosphate + H(+). Its activity is regulated as follows. Regulated by guanine nucleotide exchange factors (GEFs) which promote the exchange of bound GDP for free GTP. Regulated by GTPase activating proteins (GAPs) which increase the GTP hydrolysis activity. Inhibited by GDP dissociation inhibitors (GDIs). In terms of biological role, the small GTPases Rab are key regulators of intracellular membrane trafficking, from the formation of transport vesicles to their fusion with membranes. Rabs cycle between an inactive GDP-bound form and an active GTP-bound form that is able to recruit to membranes different sets of downstream effectors directly responsible for vesicle formation, movement, tethering and fusion. In its active state, RAB7A binds to a variety of effector proteins playing a key role in the regulation of endo-lysosomal trafficking. Governs early-to-late endosomal maturation, microtubule minus-end as well as plus-end directed endosomal migration and positioning, and endosome-lysosome transport through different protein-protein interaction cascades. Also plays a central role in growth-factor-mediated cell signaling, nutrient-transporter-mediated nutrient uptake, neurotrophin transport in the axons of neurons and lipid metabolism. Also involved in regulation of some specialized endosomal membrane trafficking, such as maturation of melanosomes, pathogen-induced phagosomes (or vacuoles) and autophagosomes. Plays a role in the maturation and acidification of phagosomes that engulf pathogens, such as S.aureus and Mycobacteria. Plays a role in the fusion of phagosomes with lysosomes. In concert with RAC1, plays a role in regulating the formation of RBs (ruffled borders) in osteoclasts. Controls the endosomal trafficking and neurite outgrowth signaling of NTRK1/TRKA. Regulates the endocytic trafficking of the EGF-EGFR complex by regulating its lysosomal degradation. Involved in the ADRB2-stimulated lipolysis through lipophagy, a cytosolic lipase-independent autophagic pathway. Required for the exosomal release of SDCBP, CD63 and syndecan. Required for vesicular trafficking and cell surface expression of ACE2. May play a role in PRPH neuronal intermediate filament assembly. The chain is Ras-related protein Rab-7a (RAB7A) from Oryctolagus cuniculus (Rabbit).